The following is a 182-amino-acid chain: Oligoribonuclease (182 aa).

The 164-residue stretch at 8-171 (LIWLDMEMTG…ADIHESIGEL (164 aa)) folds into the Exonuclease domain. Residue Y129 is part of the active site.

The protein belongs to the oligoribonuclease family.

Its subcellular location is the cytoplasm. Its function is as follows. 3'-to-5' exoribonuclease specific for small oligoribonucleotides. This chain is Oligoribonuclease, found in Azoarcus sp. (strain BH72).